Here is a 165-residue protein sequence, read N- to C-terminus: Large ribosomal subunit protein uL10 (165 aa).

Residues Lys-37 and Lys-105 each carry the N6-acetyllysine modification.

Belongs to the universal ribosomal protein uL10 family. In terms of assembly, part of the ribosomal stalk of the 50S ribosomal subunit. The N-terminus interacts with L11 and the large rRNA to form the base of the stalk. The C-terminus forms an elongated spine to which L12 dimers bind in a sequential fashion forming a multimeric L10(L12)X complex.

Functionally, protein L10 is also a translational repressor protein. It controls the translation of the rplJL-rpoBC operon by binding to its mRNA. In terms of biological role, forms part of the ribosomal stalk, playing a central role in the interaction of the ribosome with GTP-bound translation factors. This Escherichia coli O6:H1 (strain CFT073 / ATCC 700928 / UPEC) protein is Large ribosomal subunit protein uL10 (rplJ).